The primary structure comprises 220 residues: Ribosomal RNA large subunit methyltransferase E (220 aa).

S-adenosyl-L-methionine contacts are provided by glycine 60, tryptophan 62, aspartate 92, aspartate 108, and aspartate 133. The active-site Proton acceptor is the lysine 173.

The protein belongs to the class I-like SAM-binding methyltransferase superfamily. RNA methyltransferase RlmE family.

It localises to the cytoplasm. The enzyme catalyses uridine(2552) in 23S rRNA + S-adenosyl-L-methionine = 2'-O-methyluridine(2552) in 23S rRNA + S-adenosyl-L-homocysteine + H(+). Its function is as follows. Specifically methylates the uridine in position 2552 of 23S rRNA at the 2'-O position of the ribose in the fully assembled 50S ribosomal subunit. The protein is Ribosomal RNA large subunit methyltransferase E of Burkholderia multivorans (strain ATCC 17616 / 249).